Reading from the N-terminus, the 320-residue chain is Mitochondrial oxaloacetate transport protein (320 aa).

3 Solcar repeats span residues 21 to 114 (LGPV…IRRT), 126 to 218 (NKLA…AKRM), and 227 to 313 (EGMI…TNKL). Helical transmembrane passes span 26–47 (GFLSGGLAACGAVTLTNPFEVI), 91–111 (GTAYVYQICLNGCRLGFYEPI), 129–145 (AINVASGAGSGLCGALF), 197–217 (AILRTVSGSSVQLPIYNWAKR), 233–253 (LTASAVSGFGVCCTMQIFDTV), and 285–306 (LYKGFGAHLARIAPHTIFCLTF).

This sequence belongs to the mitochondrial carrier (TC 2.A.29) family.

The protein resides in the mitochondrion inner membrane. The enzyme catalyses a dicarboxylate(in) + sulfate(out) = a dicarboxylate(out) + sulfate(in). It carries out the reaction (2S)-2-isopropylmalate(in) + sulfate(out) = (2S)-2-isopropylmalate(out) + sulfate(in). It catalyses the reaction (2R,3S)-3-isopropylmalate(in) + sulfate(out) = (2R,3S)-3-isopropylmalate(out) + sulfate(in). The catalysed reaction is malonate(in) + sulfate(out) = malonate(out) + sulfate(in). The enzyme catalyses oxaloacetate(in) + sulfate(out) = oxaloacetate(out) + sulfate(in). It carries out the reaction thiosulfate(in) + sulfate(out) = thiosulfate(out) + sulfate(in). Its function is as follows. Antiporter that exchanges dicarboxylates and sulfur oxoanions across the inner membrane of mitochondria. Exports alpha-isopropylmalate from mitochondrial matrix to the cytosol, where it serves as a precursor for leucine biosynthesis. The chain is Mitochondrial oxaloacetate transport protein (oac1) from Schizosaccharomyces pombe (strain 972 / ATCC 24843) (Fission yeast).